The primary structure comprises 190 residues: Small ribosomal subunit protein uS5 (190 aa).

The S5 DRBM domain maps to 21 to 84 (FADRLVAINR…EQAKRQMIRV (64 aa)). The tract at residues 156 to 190 (KKEQSPRSVAQRRGKKVADILPKRDEAPAAEAAEA) is disordered. Residues 171 to 182 (KVADILPKRDEA) are compositionally biased toward basic and acidic residues.

It belongs to the universal ribosomal protein uS5 family. In terms of assembly, part of the 30S ribosomal subunit. Contacts proteins S4 and S8.

With S4 and S12 plays an important role in translational accuracy. Functionally, located at the back of the 30S subunit body where it stabilizes the conformation of the head with respect to the body. In Ruegeria pomeroyi (strain ATCC 700808 / DSM 15171 / DSS-3) (Silicibacter pomeroyi), this protein is Small ribosomal subunit protein uS5.